A 503-amino-acid polypeptide reads, in one-letter code: UDP-N-acetylmuramate--L-alanine ligase (503 aa).

Residue Gly120–Ser126 participates in ATP binding.

Belongs to the MurCDEF family.

The protein resides in the cytoplasm. It carries out the reaction UDP-N-acetyl-alpha-D-muramate + L-alanine + ATP = UDP-N-acetyl-alpha-D-muramoyl-L-alanine + ADP + phosphate + H(+). Its pathway is cell wall biogenesis; peptidoglycan biosynthesis. Its function is as follows. Cell wall formation. In Rhodococcus jostii (strain RHA1), this protein is UDP-N-acetylmuramate--L-alanine ligase.